Consider the following 823-residue polypeptide: Transcription factor SPT20 homolog-like 1 (823 aa).

Disordered regions lie at residues 246–273 (SVKP…KEER), 369–524 (PRKK…AAQP), 560–601 (GSSF…AVQA), 631–669 (VLTG…LGLS), and 720–757 (LRQQ…PQHI). Over residues 423 to 440 (SHSSSGPASVSQLSSWKT) the composition is skewed to polar residues. Composition is skewed to low complexity over residues 469–509 (SSSG…QKPS), 568–582 (APGS…ISGS), and 636–650 (QQQS…QLQQ).

This sequence belongs to the SPT20 family.

In Homo sapiens (Human), this protein is Transcription factor SPT20 homolog-like 1 (SUPT20HL1).